The following is a 214-amino-acid chain: Scytalone dehydratase-like protein mdpB (214 aa).

Positions 40 and 60 each coordinate substrate. Catalysis depends on residues His95 and His120.

Belongs to the scytalone dehydratase family.

It participates in secondary metabolite biosynthesis. Functionally, scytalone dehydratase-like protein; part of the gene cluster that mediates the biosynthesis of monodictyphenone, a prenyl xanthone derivative. The pathway begins with the synthesis of atrochrysone thioester by the polyketide synthase (PKS) mdpG. The atrochrysone carboxyl ACP thioesterase mdpF then breaks the thioester bond and releases the atrochrysone carboxylic acid from mdpG. The atrochrysone carboxylic acid is then converted to atrochrysone which is further transformed into emodin anthrone. The next step is performed by the anthrone oxygenase mdpH that catalyzes the oxidation of emodinanthrone to emodin. Emodin is further modified to yield monodictyphenone via several steps involving mdpB, mdpC mdpJ, mdpK and mdpL. These enzymes with xptA, xptB and xptC are also proposed to be involved in the synthesis of shamixanthone from emodin. Especially, direct reduction of emodin by the short chain dehydrogenase mdpC followed by dehydration catalyzed by the scytalone dehydratase-like protein mdpB gives loss of oxygen and formation of chrysophanol intermediate in two simple steps. This chain is Scytalone dehydratase-like protein mdpB, found in Emericella nidulans (strain FGSC A4 / ATCC 38163 / CBS 112.46 / NRRL 194 / M139) (Aspergillus nidulans).